The sequence spans 153 residues: Arginine repressor (153 aa).

Belongs to the ArgR family.

Its subcellular location is the cytoplasm. The protein operates within amino-acid biosynthesis; L-arginine biosynthesis [regulation]. In terms of biological role, regulates arginine biosynthesis genes. This is Arginine repressor from Syntrophomonas wolfei subsp. wolfei (strain DSM 2245B / Goettingen).